The following is a 293-amino-acid chain: F-box only protein 6 (293 aa).

Residues 10-57 form the F-box domain; the sequence is LDSINELPENILLELFTHVPARQLLLNCRLVCSLWRDLIDLMTLWKRK. In terms of domain architecture, FBA spans 78 to 259; it reads FYFLRSLHRN…VTNSSIVVSP (182 aa). The residue at position 258 (serine 258) is a Phosphoserine. A compositionally biased stretch (polar residues) spans 261–271; sequence MTRNQASSEAQ. The interval 261-285 is disordered; the sequence is MTRNQASSEAQPGQKHGQEEAAQSP. Serine 284 carries the phosphoserine modification.

As to quaternary structure, interacts with VCP. Part of a SCF (SKP1-cullin-F-box) protein ligase complex. Interacts with CHEK1 and CUL1.

It is found in the cytoplasm. Its pathway is protein modification; protein ubiquitination. Functionally, substrate-recognition component of some SCF (SKP1-CUL1-F-box protein)-type E3 ubiquitin ligase complexes. Involved in endoplasmic reticulum-associated degradation pathway (ERAD) for misfolded lumenal proteins by recognizing and binding sugar chains on unfolded glycoproteins that are retrotranslocated into the cytosol and promoting their ubiquitination and subsequent degradation. Able to recognize and bind denatured glycoproteins, which are modified with not only high-mannose but also complex-type oligosaccharides. Also recognizes sulfated glycans. Also involved in DNA damage response by specifically recognizing activated CHEK1 (phosphorylated on 'Ser-345'), promoting its ubiquitination and degradation. Ubiquitination of CHEK1 is required to ensure that activated CHEK1 does not accumulate as cells progress through S phase, or when replication forks encounter transient impediments during normal DNA replication. The chain is F-box only protein 6 (FBXO6) from Homo sapiens (Human).